A 175-amino-acid polypeptide reads, in one-letter code: Heme-dependent oxidative N-demethylase delta subunit (175 aa).

The heme-dependent oxidative N-demethylase (HODM) is a heterotetramer composed of a catalytic alpha subunit, a FMN/2Fe-2S-dependent oxidoreductase beta subunit, a gamma subunit with putative aminotransferase activity, and a delta subunit of unknown function.

Its function is as follows. Component of the heme-dependent oxidative N-demethylase (HODM) enzyme, that catalyzes the NADPH-dependent oxidation of dimethylamine (DMA) to methylamine (MA) and formaldehyde. Functions in bacterial methylated amine catabolism, linking alkylamine oxidation to the tetrahydrofolate C1 pool. The function of the delta subunit is unknown. In Ectopseudomonas mendocina (strain ymp) (Pseudomonas mendocina), this protein is Heme-dependent oxidative N-demethylase delta subunit.